The primary structure comprises 99 residues: Small ribosomal subunit protein bS20 (99 aa).

Belongs to the bacterial ribosomal protein bS20 family.

Functionally, binds directly to 16S ribosomal RNA. The sequence is that of Small ribosomal subunit protein bS20 from Picosynechococcus sp. (strain ATCC 27264 / PCC 7002 / PR-6) (Agmenellum quadruplicatum).